An 86-amino-acid chain; its full sequence is Large ribosomal subunit protein eL43 (86 aa).

Zn(2+) is bound by residues C40, C43, C58, and C61. The segment at 40-61 (CPFCRSKAVIREAYGIYRCKKC) adopts a C4-type zinc-finger fold.

This sequence belongs to the eukaryotic ribosomal protein eL43 family. Putative zinc-binding subfamily. As to quaternary structure, part of the 50S ribosomal subunit. The cofactor is Zn(2+).

Its function is as follows. Binds to the 23S rRNA. The protein is Large ribosomal subunit protein eL43 of Nanoarchaeum equitans (strain Kin4-M).